The primary structure comprises 580 residues: DNA ligase 1 (580 aa).

ATP is bound at residue Glu-245. Lys-247 (N6-AMP-lysine intermediate) is an active-site residue. ATP-binding residues include Arg-252, Arg-267, Glu-297, Phe-343, Arg-420, and Lys-426.

Belongs to the ATP-dependent DNA ligase family. The cofactor is Mg(2+).

It carries out the reaction ATP + (deoxyribonucleotide)n-3'-hydroxyl + 5'-phospho-(deoxyribonucleotide)m = (deoxyribonucleotide)n+m + AMP + diphosphate.. In terms of biological role, DNA ligase that seals nicks in double-stranded DNA during DNA replication, DNA recombination and DNA repair. In Methanosarcina acetivorans (strain ATCC 35395 / DSM 2834 / JCM 12185 / C2A), this protein is DNA ligase 1.